A 147-amino-acid chain; its full sequence is MADFDAVLKCWGPVEADYTTIGGLVLTRLFKEHPDTQKLFPKFAGIAQADLAGNAAISAHGATVLKKLGELLKAKGSHASILKPMANSHATKHKIPINNFKLISEVLVKVMQEKAGLDAGGQTALRNVMGIIIADLEANYKELGFTG.

Residues 2-141 enclose the Globin domain; the sequence is ADFDAVLKCW…IIADLEANYK (140 aa). His60 is a binding site for nitrite. His60 contacts O2. Position 89 (His89) interacts with heme b.

It belongs to the globin family. In terms of assembly, monomeric.

Its subcellular location is the cytoplasm. It localises to the sarcoplasm. It carries out the reaction Fe(III)-heme b-[protein] + nitric oxide + H2O = Fe(II)-heme b-[protein] + nitrite + 2 H(+). The catalysed reaction is H2O2 + AH2 = A + 2 H2O. In terms of biological role, monomeric heme protein which primary function is to store oxygen and facilitate its diffusion within muscle tissues. Reversibly binds oxygen through a pentacoordinated heme iron and enables its timely and efficient release as needed during periods of heightened demand. Depending on the oxidative conditions of tissues and cells, and in addition to its ability to bind oxygen, it also has a nitrite reductase activity whereby it regulates the production of bioactive nitric oxide. Under stress conditions, like hypoxia and anoxia, it also protects cells against reactive oxygen species thanks to its pseudoperoxidase activity. The chain is Myoglobin (mb) from Thunnus alalunga (Albacore).